Reading from the N-terminus, the 438-residue chain is Alkylcitrate synthase tstJ (438 aa).

Residues His309 and Asp365 contribute to the active site.

It belongs to the citrate synthase family.

The catalysed reaction is (2E,10E)-dode-2,10-dicenoyl-CoA + oxaloacetate + H2O = (4E,11E)-2-hydroxytrideca-4,11-dien-1,2,3-tricarboxylate + CoA + H(+). It participates in secondary metabolite biosynthesis. Alkylcitrate synthase; part of the gene cluster that mediates the biosynthesis of the antihypercholesterolemic agents phomoidrides which are dimeric anhydrides. Within the pathway, the alkylcitrate synthase (ACS) tstJ and the alkylcitrate dehydratase (ACDH) tstI produce the decarboxylated monomeric anhydrides by coupling the C12-fatty acyl product from phiA with oxalacetic acid. The pathway begins with the highly reducing polyketide synthase tstA that catalyzes the formation of a C12-fatty acyl-ACP, starting from one acetate and 5 malonate units. The hydrolase tstM is involved in the release of the C12-fatty acyl chain from phiA. The alkylcitrate synthase (ACS) tstJ and the alkylcitrate dehydratase (ACDH) tstI then give rise to decarboxylated monomeric anhydrides by coupling the C12-fatty acyl chain with oxalacetic acid. The cyclase tstC is responsible for the dimerization of the monomeric anhydrides which leads to the production of prephomoidride that contains the characteristic bicyclo[4.3.1]deca-1,6-diene system of phomoidrides. Iterative oxidation catalyzed by the alpha-ketoglutarate-dependent dioxygenase tstK produced then phomoidride A. Finally, the methyltransferase tstE converts phomoidride A to phomoidride B via an acetalization reaction. The phosphatidylethanolamine-binding protein tstB and tstN are not essential for dimerization and their functions have still to be determined. This Talaromyces stipitatus (strain ATCC 10500 / CBS 375.48 / QM 6759 / NRRL 1006) (Penicillium stipitatum) protein is Alkylcitrate synthase tstJ.